A 76-amino-acid chain; its full sequence is Alpha-amylase inhibitor Z-2685 (76 aa).

2 cysteine pairs are disulfide-bonded: cysteine 9-cysteine 25 and cysteine 43-cysteine 70.

Its function is as follows. Inhibits mammalian alpha-amylases specifically but has no action on plant and microbial alpha-amylases. The polypeptide is Alpha-amylase inhibitor Z-2685 (Streptomyces rochei (Streptomyces parvullus)).